The following is a 124-amino-acid chain: Sulfiredoxin (124 aa).

This sequence belongs to the sulfiredoxin family. As to quaternary structure, interacts with tpx1 in response to oxidative stress.

The protein localises to the cytoplasm. The protein resides in the nucleus. The enzyme catalyses S-hydroxy-S-oxy-L-cysteinyl-[peroxiredoxin] + [protein]-dithiol + ATP = S-hydroxy-L-cysteinyl-[peroxiredoxin] + [protein]-disulfide + ADP + phosphate. Its function is as follows. Contributes to oxidative stress resistance by reducing cysteine-sulfinic acid formed under exposure to oxidants in a peroxiredoxin. May catalyze the reduction in a multi-step process by acting both as a specific phosphotransferase and a thioltransferase. This chain is Sulfiredoxin (srx1), found in Schizosaccharomyces pombe (strain 972 / ATCC 24843) (Fission yeast).